Reading from the N-terminus, the 452-residue chain is tRNA modification GTPase MnmE (452 aa).

(6S)-5-formyl-5,6,7,8-tetrahydrofolate contacts are provided by Arg23, Glu80, and Lys119. In terms of domain architecture, TrmE-type G spans 215–374 (GIWIALVGQP…LQQGLLEMIG (160 aa)). Asn225 serves as a coordination point for K(+). GTP-binding positions include 225 to 230 (NVGKSS), 244 to 250 (TEVPGTT), and 269 to 272 (DTAG). Ser229 is a binding site for Mg(2+). K(+) contacts are provided by Thr244, Val246, and Thr249. Thr250 provides a ligand contact to Mg(2+). Position 452 (Lys452) interacts with (6S)-5-formyl-5,6,7,8-tetrahydrofolate.

This sequence belongs to the TRAFAC class TrmE-Era-EngA-EngB-Septin-like GTPase superfamily. TrmE GTPase family. In terms of assembly, homodimer. Heterotetramer of two MnmE and two MnmG subunits. K(+) serves as cofactor.

Its subcellular location is the cytoplasm. Functionally, exhibits a very high intrinsic GTPase hydrolysis rate. Involved in the addition of a carboxymethylaminomethyl (cmnm) group at the wobble position (U34) of certain tRNAs, forming tRNA-cmnm(5)s(2)U34. This is tRNA modification GTPase MnmE from Nitrosospira multiformis (strain ATCC 25196 / NCIMB 11849 / C 71).